The chain runs to 214 residues: Large ribosomal subunit protein uL2my, C-terminal part (214 aa).

Residues 1–30 (MSGLVALCRARASASSSLFNSVIRPAFRNF) constitute a mitochondrion transit peptide. The tract at residues 157–214 (VAMNPCDHPHGGGEGKSKSSGSRGRTSVSPWGKPCKGGYKSASVKKKKKRLAEAAAKM) is disordered. The span at 163-173 (DHPHGGGEGKS) shows a compositional bias: basic and acidic residues. Low complexity predominate over residues 174–185 (KSSGSRGRTSVS).

It belongs to the universal ribosomal protein uL2 family. As to quaternary structure, component of the mitochondrial ribosome large subunit.

It localises to the mitochondrion. This Arabidopsis thaliana (Mouse-ear cress) protein is Large ribosomal subunit protein uL2my, C-terminal part.